A 681-amino-acid chain; its full sequence is DNA ligase (681 aa).

NAD(+) is bound by residues 32–36 (DIEYD), 81–82 (SL), and glutamate 113. Catalysis depends on lysine 115, which acts as the N6-AMP-lysine intermediate. Arginine 136, glutamate 173, lysine 290, and lysine 314 together coordinate NAD(+). Cysteine 408, cysteine 411, cysteine 426, and cysteine 432 together coordinate Zn(2+). One can recognise a BRCT domain in the interval 596–681 (EIDSPFAGKT…LNNHGDVSTL (86 aa)).

This sequence belongs to the NAD-dependent DNA ligase family. LigA subfamily. It depends on Mg(2+) as a cofactor. The cofactor is Mn(2+).

It catalyses the reaction NAD(+) + (deoxyribonucleotide)n-3'-hydroxyl + 5'-phospho-(deoxyribonucleotide)m = (deoxyribonucleotide)n+m + AMP + beta-nicotinamide D-nucleotide.. DNA ligase that catalyzes the formation of phosphodiester linkages between 5'-phosphoryl and 3'-hydroxyl groups in double-stranded DNA using NAD as a coenzyme and as the energy source for the reaction. It is essential for DNA replication and repair of damaged DNA. This Pectobacterium atrosepticum (strain SCRI 1043 / ATCC BAA-672) (Erwinia carotovora subsp. atroseptica) protein is DNA ligase.